Consider the following 185-residue polypeptide: MHTSIQRIQQTFSQASTVLSIIAAIVFVVSYIQLVVANVWSLPEANFNLRGSKAARRFSRQYGANDPKKGKENVALKFDLDADLSPLFNWNTKLVFAYLTATYDGKRDDIVNEITIWDQIITDKDDSHIKLKGANSKYSLYDVEESFRNRNATVKLHWNIQPHVGAKIYGSLDATKGSIKFPQLV.

Topologically, residues 1–16 (MHTSIQRIQQTFSQAS) are cytoplasmic. Residues 17 to 37 (TVLSIIAAIVFVVSYIQLVVA) form a helical; Signal-anchor for type II membrane protein membrane-spanning segment. Over 38–185 (NVWSLPEANF…KGSIKFPQLV (148 aa)) the chain is Lumenal. An N-linked (GlcNAc...) asparagine glycan is attached at Asn-151.

It belongs to the SPCS3 family. Component of the signal peptidase complex (SPC) composed of a catalytic subunit SEC11 and three accessory subunits SPC1, SPC2 and SPC3. The complex induces a local thinning of the ER membrane which is used to measure the length of the signal peptide (SP) h-region of protein substrates. This ensures the selectivity of the complex towards h-regions shorter than 18-20 amino acids. SPC associates with the translocon complex.

It is found in the endoplasmic reticulum membrane. Its function is as follows. Essential component of the signal peptidase complex (SPC) which catalyzes the cleavage of N-terminal signal sequences from nascent proteins as they are translocated into the lumen of the endoplasmic reticulum. Essential for the SPC catalytic activity, possibly by stabilizing and positioning the active center of the complex close to the lumenal surface. Essential for viability. The protein is Signal peptidase complex subunit 3 (SPC3) of Yarrowia lipolytica (strain CLIB 122 / E 150) (Yeast).